Consider the following 230-residue polypeptide: Ion-translocating oxidoreductase complex subunit E (230 aa).

A run of 6 helical transmembrane segments spans residues Ala-18 to Ala-38, Leu-39 to Leu-59, Thr-63 to Val-83, Leu-86 to Val-106, Ala-125 to Leu-145, and Pro-182 to Val-202.

The protein belongs to the NqrDE/RnfAE family. In terms of assembly, the complex is composed of six subunits: RnfA, RnfB, RnfC, RnfD, RnfE and RnfG.

It localises to the cell inner membrane. Part of a membrane-bound complex that couples electron transfer with translocation of ions across the membrane. The chain is Ion-translocating oxidoreductase complex subunit E from Citrobacter koseri (strain ATCC BAA-895 / CDC 4225-83 / SGSC4696).